Consider the following 239-residue polypeptide: MINNVISPEFDENGRPMRRIRSFVRRQGRLTNGQQLALDNYWPVMGVEYQTEPVDFNALFGRDAPVVLEIGFGMGASLVTMAAQHPEQNFLGIEVHLPGVGACLASAQDVEISNLRVMCHDALEVLMKMIPDSSLSMVQLFFPDPWHKVRHNKRRIVQAPFVELVQSKLKVGGVFHMATDWEPYARHMLKVMTSVAGYRNLSDNNEYVVRPESRPLTKFEARGQRLGHGVWDLMFERIK.

S-adenosyl-L-methionine-binding residues include Glu-69, Glu-94, Asp-121, and Asp-144. The active site involves Asp-144. Residue Lys-148 coordinates substrate. Residues 150–155 form an interaction with RNA region; sequence RHNKRR. Substrate-binding positions include Asp-180 and 217-220; that span reads TKFE.

It belongs to the class I-like SAM-binding methyltransferase superfamily. TrmB family. Monomer.

It carries out the reaction guanosine(46) in tRNA + S-adenosyl-L-methionine = N(7)-methylguanosine(46) in tRNA + S-adenosyl-L-homocysteine. The protein operates within tRNA modification; N(7)-methylguanine-tRNA biosynthesis. Functionally, catalyzes the formation of N(7)-methylguanine at position 46 (m7G46) in tRNA. The sequence is that of tRNA (guanine-N(7)-)-methyltransferase from Pectobacterium atrosepticum (strain SCRI 1043 / ATCC BAA-672) (Erwinia carotovora subsp. atroseptica).